The primary structure comprises 95 residues: Large ribosomal subunit protein uL23 (95 aa).

It belongs to the universal ribosomal protein uL23 family. As to quaternary structure, part of the 50S ribosomal subunit. Contacts protein L29, and trigger factor when it is bound to the ribosome.

Functionally, one of the early assembly proteins it binds 23S rRNA. One of the proteins that surrounds the polypeptide exit tunnel on the outside of the ribosome. Forms the main docking site for trigger factor binding to the ribosome. This is Large ribosomal subunit protein uL23 from Thermodesulfovibrio yellowstonii (strain ATCC 51303 / DSM 11347 / YP87).